Here is a 134-residue protein sequence, read N- to C-terminus: Profilin-3 (134 aa).

Cysteines 13 and 118 form a disulfide. Positions 84–100 match the Involved in PIP2 interaction motif; it reads AVIRGKKGSGGITIKKT. Thr-114 is modified (phosphothreonine).

The protein belongs to the profilin family. In terms of assembly, occurs in many kinds of cells as a complex with monomeric actin in a 1:1 ratio. Phosphorylated by MAP kinases.

The protein resides in the cytoplasm. It localises to the cytoskeleton. In terms of biological role, binds to actin and affects the structure of the cytoskeleton. At high concentrations, profilin prevents the polymerization of actin, whereas it enhances it at low concentrations. This chain is Profilin-3, found in Olea europaea (Common olive).